The following is a 445-amino-acid chain: 6-phosphogluconate dehydrogenase, decarboxylating (445 aa).

Residues 1–4 (AVMG), 22–24 (NRS), 63–65 (VKA), and N91 each bind NADP(+). Substrate-binding positions include N91 and 117–119 (SGG). Residue K172 is the Proton acceptor of the active site. Residue 175-176 (HN) participates in substrate binding. Catalysis depends on E179, which acts as the Proton donor. Y180, K249, R276, R434, and H440 together coordinate substrate.

Belongs to the 6-phosphogluconate dehydrogenase family. In terms of assembly, homodimer.

It carries out the reaction 6-phospho-D-gluconate + NADP(+) = D-ribulose 5-phosphate + CO2 + NADPH. It participates in carbohydrate degradation; pentose phosphate pathway; D-ribulose 5-phosphate from D-glucose 6-phosphate (oxidative stage): step 3/3. Its function is as follows. Catalyzes the oxidative decarboxylation of 6-phosphogluconate to ribulose 5-phosphate and CO(2), with concomitant reduction of NADP to NADPH. The chain is 6-phosphogluconate dehydrogenase, decarboxylating (gnd) from Citrobacter freundii.